The sequence spans 85 residues: Large ribosomal subunit protein bL27 (85 aa).

Positions 1–21 (MAHKKGVGSSRNGRDSDGQRL) are disordered.

Belongs to the bacterial ribosomal protein bL27 family.

The protein is Large ribosomal subunit protein bL27 of Geobacter sp. (strain M21).